A 255-amino-acid chain; its full sequence is 2,3-dehydroadipyl-CoA hydratase (255 aa).

It belongs to the enoyl-CoA hydratase/isomerase family.

The enzyme catalyses a (3S)-3-hydroxyacyl-CoA = a (2E)-enoyl-CoA + H2O. It catalyses the reaction a 4-saturated-(3S)-3-hydroxyacyl-CoA = a (3E)-enoyl-CoA + H2O. The protein operates within aromatic compound metabolism; phenylacetate degradation. Its function is as follows. Catalyzes the reversible conversion of enzymatically produced 2,3-dehydroadipyl-CoA into 3-hydroxyadipyl-CoA. The sequence is that of 2,3-dehydroadipyl-CoA hydratase (paaF) from Escherichia coli (strain K12).